Here is a 311-residue protein sequence, read N- to C-terminus: MYAHLALILGCWTVVLQGAETDVGERADNRRPIWNLAHMVNAVAQIPDFLDLGANALEADVTFKGSVPTYTYHGTPCDFGRDCIRWEYFNVFLKTLREYTTPGNAKYRDGFILFVLDLKTGSLSNDQVRPAGENVAKELLQNYWNNGNNGGRAYVVLSLPDIGHYEFVRGFKEVLKKEGHEDLLEKVGYDFSGPYLPSLPTLDATHEAYKKAGVDGHIWLSDGLTNFSPLGDMARLKEAIKSRDSANGFINKIYYWSVDKVSTTKAALDVGVDGIMTNYPNVLIGVLKESGYNDKYRLATYDDNPWETFKN.

Residues 1–21 (MYAHLALILGCWTVVLQGAET) form the signal peptide. The propeptide occupies 22–26 (DVGER). His38 is a catalytic residue. Positions 58 and 60 each coordinate Mg(2+). His73 acts as the Nucleophile in catalysis. Cys77 and Cys83 are oxidised to a cystine. Mg(2+) is bound at residue Asp117.

Belongs to the arthropod phospholipase D family. Class I subfamily. Mg(2+) serves as cofactor. Expressed by the venom gland.

It is found in the secreted. It catalyses the reaction an N-(acyl)-sphingosylphosphocholine = an N-(acyl)-sphingosyl-1,3-cyclic phosphate + choline. The enzyme catalyses an N-(acyl)-sphingosylphosphoethanolamine = an N-(acyl)-sphingosyl-1,3-cyclic phosphate + ethanolamine. The catalysed reaction is a 1-acyl-sn-glycero-3-phosphocholine = a 1-acyl-sn-glycero-2,3-cyclic phosphate + choline. It carries out the reaction a 1-acyl-sn-glycero-3-phosphoethanolamine = a 1-acyl-sn-glycero-2,3-cyclic phosphate + ethanolamine. In terms of biological role, dermonecrotic toxins cleave the phosphodiester linkage between the phosphate and headgroup of certain phospholipids (sphingolipid and lysolipid substrates), forming an alcohol (often choline) and a cyclic phosphate. This toxin acts on sphingomyelin (SM) with high activity. It also act on acyl- and alkyl-lysophosphatidylcholine (LPC), but not on sphingosylphosphorylcholine (SPC) and phosphatidylcholine (PC). It may also act on ceramide phosphoethanolamine (CPE), and lysophosphatidylethanolamine (LPE), but not on lysophosphatidylserine (LPS), and lysophosphatidylglycerol (LPG). It acts by transphosphatidylation, releasing exclusively cyclic phosphate products as second products. Induces complement-dependent hemolysis and dermonecrosis. Also induces increased vascular permeability, edema, inflammatory response, and platelet aggregation. The sequence is that of Dermonecrotic toxin LlSicTox-alphaIII1i from Loxosceles laeta (South American recluse spider).